We begin with the raw amino-acid sequence, 135 residues long: Sex-regulated protein janus-A (135 aa).

Residue Lys37 coordinates substrate. His63 acts as the Proton acceptor in catalysis. Residue 104–106 coordinates substrate; that stretch reads SQG.

The protein belongs to the janus family.

JanA and janB regulate somatic sex differentiation. This is Sex-regulated protein janus-A (janA) from Drosophila erecta (Fruit fly).